Consider the following 547-residue polypeptide: Chaperonin GroEL 1 (547 aa).

ATP contacts are provided by residues 30 to 33 (TLGP), lysine 51, 87 to 91 (DGTTT), glycine 415, and aspartate 496.

It belongs to the chaperonin (HSP60) family. Forms a cylinder of 14 subunits composed of two heptameric rings stacked back-to-back. Interacts with the co-chaperonin GroES.

It localises to the cytoplasm. It carries out the reaction ATP + H2O + a folded polypeptide = ADP + phosphate + an unfolded polypeptide.. In terms of biological role, together with its co-chaperonin GroES, plays an essential role in assisting protein folding. The GroEL-GroES system forms a nano-cage that allows encapsulation of the non-native substrate proteins and provides a physical environment optimized to promote and accelerate protein folding. The sequence is that of Chaperonin GroEL 1 from Rhodopseudomonas palustris (strain ATCC BAA-98 / CGA009).